The chain runs to 115 residues: NAD(P)H-quinone oxidoreductase subunit M (115 aa).

It belongs to the complex I NdhM subunit family. NDH-1 can be composed of about 15 different subunits; different subcomplexes with different compositions have been identified which probably have different functions.

It is found in the cellular thylakoid membrane. It carries out the reaction a plastoquinone + NADH + (n+1) H(+)(in) = a plastoquinol + NAD(+) + n H(+)(out). The catalysed reaction is a plastoquinone + NADPH + (n+1) H(+)(in) = a plastoquinol + NADP(+) + n H(+)(out). NDH-1 shuttles electrons from an unknown electron donor, via FMN and iron-sulfur (Fe-S) centers, to quinones in the respiratory and/or the photosynthetic chain. The immediate electron acceptor for the enzyme in this species is believed to be plastoquinone. Couples the redox reaction to proton translocation, and thus conserves the redox energy in a proton gradient. Cyanobacterial NDH-1 also plays a role in inorganic carbon-concentration. The protein is NAD(P)H-quinone oxidoreductase subunit M of Prochlorococcus marinus (strain MIT 9312).